Reading from the N-terminus, the 231-residue chain is GFP-like fluorescent chromoprotein FP506 (231 aa).

Residues 66–68 constitute a cross-link (5-imidazolinone (Asn-Gly)); it reads NYG. 2,3-didehydrotyrosine is present on Y67.

This sequence belongs to the GFP family. In terms of processing, contains a chromophore consisting of modified amino acid residues. The chromophore is formed by autocatalytic backbone condensation between Xaa-N and Gly-(N+2), and oxidation of Tyr-(N+1) to didehydrotyrosine. Maturation of the chromophore requires nothing other than molecular oxygen. The precise stereochemistry of the tyrosine has not been determined. In terms of tissue distribution, tentacle and oral disk.

Functionally, pigment protein that is yellow-green in color. This is GFP-like fluorescent chromoprotein FP506 from Zoanthus sp. (Green polyp).